The chain runs to 103 residues: Small ribosomal subunit protein uS10 (103 aa).

Belongs to the universal ribosomal protein uS10 family. In terms of assembly, part of the 30S ribosomal subunit.

Its function is as follows. Involved in the binding of tRNA to the ribosomes. This chain is Small ribosomal subunit protein uS10, found in Chlorobaculum tepidum (strain ATCC 49652 / DSM 12025 / NBRC 103806 / TLS) (Chlorobium tepidum).